Here is a 190-residue protein sequence, read N- to C-terminus: Segregation and condensation protein B (190 aa).

Belongs to the ScpB family. As to quaternary structure, homodimer. Homodimerization may be required to stabilize the binding of ScpA to the Smc head domains. Component of a cohesin-like complex composed of ScpA, ScpB and the Smc homodimer, in which ScpA and ScpB bind to the head domain of Smc. The presence of the three proteins is required for the association of the complex with DNA.

The protein localises to the cytoplasm. In terms of biological role, participates in chromosomal partition during cell division. May act via the formation of a condensin-like complex containing Smc and ScpA that pull DNA away from mid-cell into both cell halves. The protein is Segregation and condensation protein B of Ruminiclostridium cellulolyticum (strain ATCC 35319 / DSM 5812 / JCM 6584 / H10) (Clostridium cellulolyticum).